A 371-amino-acid polypeptide reads, in one-letter code: Choline kinase B1 (371 aa).

This sequence belongs to the choline/ethanolamine kinase family. Requires Mg(2+) as cofactor.

The enzyme catalyses choline + ATP = phosphocholine + ADP + H(+). The chain is Choline kinase B1 (ckb-1) from Caenorhabditis elegans.